The sequence spans 469 residues: Glutamate--tRNA ligase (469 aa).

The short motif at 9–19 is the 'HIGH' region element; it reads PSPTGYLHVGG. Residues cysteine 98, cysteine 100, cysteine 125, and aspartate 127 each coordinate Zn(2+). The 'KMSKS' region motif lies at 237–241; it reads KLSKR. Lysine 240 is an ATP binding site.

This sequence belongs to the class-I aminoacyl-tRNA synthetase family. Glutamate--tRNA ligase type 1 subfamily. Monomer. The cofactor is Zn(2+).

It localises to the cytoplasm. The catalysed reaction is tRNA(Glu) + L-glutamate + ATP = L-glutamyl-tRNA(Glu) + AMP + diphosphate. Its function is as follows. Catalyzes the attachment of glutamate to tRNA(Glu) in a two-step reaction: glutamate is first activated by ATP to form Glu-AMP and then transferred to the acceptor end of tRNA(Glu). This chain is Glutamate--tRNA ligase, found in Erwinia tasmaniensis (strain DSM 17950 / CFBP 7177 / CIP 109463 / NCPPB 4357 / Et1/99).